The following is a 297-amino-acid chain: 4-diphosphocytidyl-2-C-methyl-D-erythritol kinase (297 aa).

The active site involves lysine 10. 94–104 (PVAAGLAGGSS) contacts ATP. The active site involves aspartate 136.

It belongs to the GHMP kinase family. IspE subfamily.

It carries out the reaction 4-CDP-2-C-methyl-D-erythritol + ATP = 4-CDP-2-C-methyl-D-erythritol 2-phosphate + ADP + H(+). It participates in isoprenoid biosynthesis; isopentenyl diphosphate biosynthesis via DXP pathway; isopentenyl diphosphate from 1-deoxy-D-xylulose 5-phosphate: step 3/6. In terms of biological role, catalyzes the phosphorylation of the position 2 hydroxy group of 4-diphosphocytidyl-2C-methyl-D-erythritol. This Shouchella clausii (strain KSM-K16) (Alkalihalobacillus clausii) protein is 4-diphosphocytidyl-2-C-methyl-D-erythritol kinase.